Reading from the N-terminus, the 680-residue chain is DNA-directed RNA polymerase subunit beta' (680 aa).

Residues C69, C71, C87, and C90 each coordinate Zn(2+). Residues D489, D491, and D493 each contribute to the Mg(2+) site.

Belongs to the RNA polymerase beta' chain family. RpoC1 subfamily. In plastids the minimal PEP RNA polymerase catalytic core is composed of four subunits: alpha, beta, beta', and beta''. When a (nuclear-encoded) sigma factor is associated with the core the holoenzyme is formed, which can initiate transcription. The cofactor is Mg(2+). It depends on Zn(2+) as a cofactor.

It localises to the plastid. The protein localises to the chloroplast. It carries out the reaction RNA(n) + a ribonucleoside 5'-triphosphate = RNA(n+1) + diphosphate. In terms of biological role, DNA-dependent RNA polymerase catalyzes the transcription of DNA into RNA using the four ribonucleoside triphosphates as substrates. This chain is DNA-directed RNA polymerase subunit beta', found in Ceratophyllum demersum (Rigid hornwort).